We begin with the raw amino-acid sequence, 303 residues long: Bifunctional protein FolD (303 aa).

NADP(+) is bound by residues 168–170 (GRS), threonine 197, and valine 238.

It belongs to the tetrahydrofolate dehydrogenase/cyclohydrolase family. As to quaternary structure, homodimer.

The enzyme catalyses (6R)-5,10-methylene-5,6,7,8-tetrahydrofolate + NADP(+) = (6R)-5,10-methenyltetrahydrofolate + NADPH. It carries out the reaction (6R)-5,10-methenyltetrahydrofolate + H2O = (6R)-10-formyltetrahydrofolate + H(+). It participates in one-carbon metabolism; tetrahydrofolate interconversion. Its function is as follows. Catalyzes the oxidation of 5,10-methylenetetrahydrofolate to 5,10-methenyltetrahydrofolate and then the hydrolysis of 5,10-methenyltetrahydrofolate to 10-formyltetrahydrofolate. The protein is Bifunctional protein FolD of Desulfosudis oleivorans (strain DSM 6200 / JCM 39069 / Hxd3) (Desulfococcus oleovorans).